Consider the following 134-residue polypeptide: Profilin-4 (134 aa).

The protein belongs to the profilin family. As to quaternary structure, occurs in many kinds of cells as a complex with monomeric actin in a 1:1 ratio. Specifically expressed in mature and germinating pollen grains, and growing pollen tubes (at protein level).

It is found in the cytoplasm. The protein localises to the cytoskeleton. Functionally, binds to actin monomers and regulates the organization of the actin cytoskeleton. At high concentrations, profilin prevents the polymerization of actin, whereas it enhances it at low concentrations. At low concentrations, associates with the poly-proline motif of formins to enhance actin filament elongation rate. Acts redundantly with PRF5 to regulate apical actin polymerization at the tip of pollen tube and control polarized pollen tube growth. Functions probably by favoring formin-mediated actin polymerization at pollen tube tips. This chain is Profilin-4, found in Arabidopsis thaliana (Mouse-ear cress).